A 224-amino-acid chain; its full sequence is Small ribosomal subunit protein uS3 (224 aa).

The KH type-2 domain maps to 38–106 (LREFVKEKLG…EVYLNVVEVR (69 aa)).

The protein belongs to the universal ribosomal protein uS3 family. In terms of assembly, part of the 30S ribosomal subunit. Forms a tight complex with proteins S10 and S14.

Binds the lower part of the 30S subunit head. Binds mRNA in the 70S ribosome, positioning it for translation. The sequence is that of Small ribosomal subunit protein uS3 from Anaeromyxobacter dehalogenans (strain 2CP-1 / ATCC BAA-258).